We begin with the raw amino-acid sequence, 658 residues long: Putative arrestin-related trafficking adapter C2D10.04 (658 aa).

Disordered regions lie at residues 21–107 (LHHQ…LTWS) and 638–658 (REEA…EIPR). Residues 39–81 (NRSSNSGLNRRNSVFGLPSSGLSSRLSKPSLSSINNSNNSSSN) show a composition bias toward low complexity. Residues 96–107 (RNMSNKPPLTWS) show a composition bias toward polar residues. Serine 653 carries the phosphoserine modification.

Belongs to the ALY1 family.

Its subcellular location is the cytoplasm. Its function is as follows. May regulate endocytosis in response to extracellular stimuli. This is Putative arrestin-related trafficking adapter C2D10.04 from Schizosaccharomyces pombe (strain 972 / ATCC 24843) (Fission yeast).